The primary structure comprises 2572 residues: Zinc finger homeobox protein 2 (2572 aa).

2 disordered regions span residues 1–107 (MATL…GLPP) and 343–425 (LSPP…ADDY). Low complexity predominate over residues 8–36 (STTGTTPSPGHNAPSLPSDTFSSSTPSDP). 2 stretches are compositionally biased toward polar residues: residues 44-53 (ASSTSENMRS) and 389-398 (LNQSSPTSKE). C2H2-type zinc fingers lie at residues 453-476 (LKCP…REKH) and 508-532 (YRCD…SDKH). Disordered regions lie at residues 537–566 (QGFQ…PKTK), 608–655 (LPPG…LRPD), and 675–710 (RKFP…SPPP). Over residues 615-628 (PGPPPPPGATPTSP) the composition is skewed to pro residues. Positions 696-705 (LLGSSSDSLP) are enriched in low complexity. 2 C2H2-type zinc fingers span residues 821–845 (LRCN…GAAH) and 870–894 (YHCL…TPAH). The interval 929–974 (QLRTPGKAPVTPLAEPPTPEKDAQNKTEQLASEETENKTGPSRDSA) is disordered. Polar residues predominate over residues 954 to 974 (KTEQLASEETENKTGPSRDSA). The C2H2-type 5 zinc-finger motif lies at 1009–1032 (YRCPLCQEQLVGRPALHFHLSHLH). Residues 1061–1171 (PTLSPLDNGQ…PAPADSRHPL (111 aa)) are disordered. Residues 1120–1132 (GQPPSPAPSPVPE) are compositionally biased toward pro residues. C2H2-type zinc fingers lie at residues 1191-1217 (YKCT…SHLH) and 1248-1272 (FKCT…SVLH). Disordered stretches follow at residues 1269–1325 (SVLH…FLSP), 1389–1408 (LPAA…LAER), and 1415–1434 (MAKE…LPNE). Over residues 1279-1311 (TKTDSKIEGPERSQEEPKEGETEGEVGTEKKGP) the composition is skewed to basic and acidic residues. A compositionally biased stretch (pro residues) spans 1392-1401 (ATPPPPPQPP). The C2H2-type 8 zinc-finger motif lies at 1480–1503 (LACGACGKLFSNMLILKTHEEHVH). A disordered region spans residues 1528-1591 (PPLAEPPKPP…SSRGNLPPLV (64 aa)). A DNA-binding region (homeobox 1) is located at residues 1595–1654 (RRFSRTKFTEFQTQALQSFFETSAYPKDGEVERLASLLGLASRVVVVWFQNARQKARKNA). The segment at 1670–1696 (SGCRRCHATFSCVFELVRHLKKCYDDQ) adopts a C2H2-type 9; degenerate zinc-finger fold. Residues 1696–1724 (QTLEEEEEEAERGEEEEEVEEEEVEEEQG) are compositionally biased toward acidic residues. Disordered regions lie at residues 1696–1769 (QTLE…SPAH), 1820–1860 (AATS…DKRL), 1912–2065 (ERKG…GMGQ), 2268–2327 (VQTA…NDAL), and 2398–2431 (NALL…EAGE). The segment covering 1728–1738 (PAGPEGPLPEP) has biased composition (pro residues). The C2H2-type 10 zinc-finger motif lies at 1769–1791 (HTCDQCAISFSSQDLLTSHRRLH). The segment at residues 1857-1916 (DKRLRTTILPEQLEILYRWYMQDSNPTRKMLDCISEEVGLKKRVVQVWFQNTRARERKGQ) is a DNA-binding region (homeobox 2). A compositionally biased stretch (low complexity) spans 1925–1939 (PSPAVKPPATATPAS). Basic and acidic residues predominate over residues 1949–1963 (KVDDGTGREAPKREA). Residues 1991–2004 (TPEPPLPLLPPPPP) show a composition bias toward pro residues. A compositionally biased stretch (low complexity) spans 2017–2044 (SPESEACSLSAGDLSDSSASSLAEPESP). The span at 2045 to 2061 (GAGGTSGGPGGGTGVPD) shows a compositional bias: gly residues. A DNA-binding region (homeobox 3) is located at residues 2065 to 2124 (QRRYRTQMSSLQLKIMKACYEAYRTPTMQECEVLGEEIGLPKRVIQVWFQNARAKEKKAK). Polar residues predominate over residues 2284–2293 (DQTNTSTAGT). A compositionally biased stretch (basic and acidic residues) spans 2305-2315 (LGDKVSSERKP). Positions 2402 to 2422 (QPPPQPPEPTATAPPKPPELP) are enriched in pro residues. The segment at 2451 to 2471 (YLCRQCKMAFDGEAPATAHQR) adopts a C2H2-type 11; degenerate zinc-finger fold. Residues 2495 to 2519 (YHCLACEVLLSGREALASHLRSSAH) form a C2H2-type 12 zinc finger. The tract at residues 2551-2572 (EARLPHTDSNPKTTTTSTLLAL) is disordered. A compositionally biased stretch (low complexity) spans 2563–2572 (TTTTSTLLAL).

The protein localises to the nucleus. Functionally, transcriptional regulator that is critical for the regulation of pain perception and processing of noxious stimuli. This Homo sapiens (Human) protein is Zinc finger homeobox protein 2 (ZFHX2).